Here is a 142-residue protein sequence, read N- to C-terminus: Universal stress protein C (142 aa).

The protein belongs to the universal stress protein A family.

It localises to the cytoplasm. Required for resistance to DNA-damaging agents. This chain is Universal stress protein C (uspC), found in Escherichia coli O6:H1 (strain CFT073 / ATCC 700928 / UPEC).